A 681-amino-acid polypeptide reads, in one-letter code: Potassium-transporting ATPase ATP-binding subunit (681 aa).

The next 4 helical transmembrane spans lie at L30–I50, L59–A79, I216–T236, and I255–I275. The active-site 4-aspartylphosphate intermediate is the D306. ATP is bound by residues D343, E347, F376–S383, and K394. Mg(2+) is bound by residues D517 and D521. 3 helical membrane passes run F587–M607, A615–L635, and L661–V681.

This sequence belongs to the cation transport ATPase (P-type) (TC 3.A.3) family. Type IA subfamily. The system is composed of three essential subunits: KdpA, KdpB and KdpC.

It is found in the cell membrane. It carries out the reaction K(+)(out) + ATP + H2O = K(+)(in) + ADP + phosphate + H(+). Functionally, part of the high-affinity ATP-driven potassium transport (or Kdp) system, which catalyzes the hydrolysis of ATP coupled with the electrogenic transport of potassium into the cytoplasm. This subunit is responsible for energy coupling to the transport system and for the release of the potassium ions to the cytoplasm. This Listeria welshimeri serovar 6b (strain ATCC 35897 / DSM 20650 / CCUG 15529 / CIP 8149 / NCTC 11857 / SLCC 5334 / V8) protein is Potassium-transporting ATPase ATP-binding subunit.